The sequence spans 284 residues: Two-pore potassium channel 4 (284 aa).

A disordered region spans residues 1–21 (MEEENLLNENLLHPNESSPEE). The Cytoplasmic segment spans residues 1–31 (MEEENLLNENLLHPNESSPEETQVTTVSKSK). A helical membrane pass occupies residues 32–52 (WTILVLAMILLLVYLTFGVCT). Residues 70 to 89 (DAFYFSIVTFSTVGYGDIVP) constitute an intramembrane region (pore-forming). A helical membrane pass occupies residues 93–113 (TTKILTIVLVSTGVVFLDYLL). The Cytoplasmic segment spans residues 114 to 156 (NRVVSHVLSLQENAILDRINKTRNRAIRDHIAEDGKIRLKWKL). A helical transmembrane segment spans residues 157 to 177 (CLAFCAVGLCVGSGALFLHVF). Residues 184–203 (DSVYLSVISVTTVGYGDKTF) constitute an intramembrane region (pore-forming). The helical transmembrane segment at 211 to 231 (FAVFWLLLSTIAMATLFLYLA) threads the bilayer. The Cytoplasmic portion of the chain corresponds to 232 to 284 (EMRIDRTTVMKLPPSESEFIVFKLRESGRISEDDIKQIVREFENLEEVPSSGS).

The protein belongs to the two pore domain potassium channel (TC 1.A.1.7) family. Homodimer. In terms of tissue distribution, predominantly expressed in pollen.

It is found in the cell membrane. In terms of biological role, voltage-independent, instantaneously activating, potassium-selective plasma membrane ion channel. Open rectifier. Regulated by cytoplasmic pH and extra-cellular calcium. Has some permeability for Rb(+) and NH(4)(+), but none for Na(+) or Li(+). This chain is Two-pore potassium channel 4 (TPK4), found in Arabidopsis thaliana (Mouse-ear cress).